The following is a 117-amino-acid chain: MVTILIYLLILLIINVVLLLLGLIINKRSYSDREKNSPFECGFDPSIHTRAPFSMRFFLLAVIFLIFDVEIILLLPLTSNILNSNTHWPLTSSMIFLTILLIGLFHEWNQGSLDWMK.

Helical transmembrane passes span 4 to 24 (ILIYLLILLIINVVLLLLGLI), 57 to 77 (FFLLAVIFLIFDVEIILLLPL), and 88 to 108 (WPLTSSMIFLTILLIGLFHEW).

Belongs to the complex I subunit 3 family.

It localises to the mitochondrion membrane. The enzyme catalyses a ubiquinone + NADH + 5 H(+)(in) = a ubiquinol + NAD(+) + 4 H(+)(out). In terms of biological role, core subunit of the mitochondrial membrane respiratory chain NADH dehydrogenase (Complex I) that is believed to belong to the minimal assembly required for catalysis. Complex I functions in the transfer of electrons from NADH to the respiratory chain. The immediate electron acceptor for the enzyme is believed to be ubiquinone. The polypeptide is NADH-ubiquinone oxidoreductase chain 3 (ND3) (Heterololigo bleekeri (Spear squid)).